Here is a 230-residue protein sequence, read N- to C-terminus: Orotidine 5'-phosphate decarboxylase (230 aa).

Substrate contacts are provided by residues Asp-10, Lys-31, 58 to 67 (DLKLHDIPNT), Thr-117, Arg-179, Gln-188, Gly-208, and Arg-209. Lys-60 functions as the Proton donor in the catalytic mechanism.

Belongs to the OMP decarboxylase family. Type 1 subfamily. As to quaternary structure, homodimer.

The enzyme catalyses orotidine 5'-phosphate + H(+) = UMP + CO2. It functions in the pathway pyrimidine metabolism; UMP biosynthesis via de novo pathway; UMP from orotate: step 2/2. In terms of biological role, catalyzes the decarboxylation of orotidine 5'-monophosphate (OMP) to uridine 5'-monophosphate (UMP). In Staphylococcus aureus (strain Mu3 / ATCC 700698), this protein is Orotidine 5'-phosphate decarboxylase.